We begin with the raw amino-acid sequence, 205 residues long: Protein N-terminal glutamine amidohydrolase (205 aa).

Active-site residues include Cys20, His74, and Asp90.

It belongs to the NTAQ1 family. In terms of assembly, monomer.

It carries out the reaction N-terminal L-glutaminyl-[protein] + H2O = N-terminal L-glutamyl-[protein] + NH4(+). In terms of biological role, mediates the side-chain deamidation of N-terminal glutamine residues to glutamate, an important step in N-end rule pathway of protein degradation. Conversion of the resulting N-terminal glutamine to glutamate renders the protein susceptible to arginylation, polyubiquitination and degradation as specified by the N-end rule. Does not act on substrates with internal or C-terminal glutamine and does not act on non-glutamine residues in any position. In Drosophila ananassae (Fruit fly), this protein is Protein N-terminal glutamine amidohydrolase (tun).